The primary structure comprises 118 residues: UPF0102 protein Arth_2474 (118 aa).

Belongs to the UPF0102 family.

This Arthrobacter sp. (strain FB24) protein is UPF0102 protein Arth_2474.